Consider the following 387-residue polypeptide: 1-deoxy-D-xylulose 5-phosphate reductoisomerase (387 aa).

Residues Thr-10, Gly-11, Ser-12, Ile-13, Gly-36, Lys-37, Asn-38, and Asn-123 each contribute to the NADPH site. 1-deoxy-D-xylulose 5-phosphate is bound at residue Lys-124. Glu-125 contacts NADPH. Asp-149 is a binding site for Mn(2+). Positions 150, 151, 175, and 198 each coordinate 1-deoxy-D-xylulose 5-phosphate. Mn(2+) is bound at residue Glu-151. Gly-204 lines the NADPH pocket. Positions 211, 216, 217, and 220 each coordinate 1-deoxy-D-xylulose 5-phosphate. A Mn(2+)-binding site is contributed by Glu-220.

It belongs to the DXR family. It depends on Mg(2+) as a cofactor. Requires Mn(2+) as cofactor.

It catalyses the reaction 2-C-methyl-D-erythritol 4-phosphate + NADP(+) = 1-deoxy-D-xylulose 5-phosphate + NADPH + H(+). It functions in the pathway isoprenoid biosynthesis; isopentenyl diphosphate biosynthesis via DXP pathway; isopentenyl diphosphate from 1-deoxy-D-xylulose 5-phosphate: step 1/6. Its function is as follows. Catalyzes the NADPH-dependent rearrangement and reduction of 1-deoxy-D-xylulose-5-phosphate (DXP) to 2-C-methyl-D-erythritol 4-phosphate (MEP). The sequence is that of 1-deoxy-D-xylulose 5-phosphate reductoisomerase from Pelotomaculum thermopropionicum (strain DSM 13744 / JCM 10971 / SI).